A 156-amino-acid chain; its full sequence is CASP-like protein 5C1 (156 aa).

Over 1 to 21 the chain is Cytoplasmic; that stretch reads MENRERAGAGAVGSAGSLGLR. Residues 22–42 traverse the membrane as a helical segment; the sequence is VGQAVFSSASLLFMSVGVEFF. Residues 43–46 lie on the Extracellular side of the membrane; sequence SYTA. Residues 47–67 form a helical membrane-spanning segment; that stretch reads FCFLVTIMGLVIPWSCTLAMI. Residues 68 to 81 are Cytoplasmic-facing; that stretch reads DVYSILVGCPLRVP. A helical membrane pass occupies residues 82-102; that stretch reads GVMVIVVIGDWVLAILSLAAA. Over 103–132 the chain is Extracellular; sequence SSSAAVIDLLLQFHGSHCSPRFCGRYQLSA. Residues 133-153 form a helical membrane-spanning segment; sequence MMAFLSWFLTAASSLFNLWFI. Topologically, residues 154–156 are cytoplasmic; that stretch reads ASR.

It belongs to the Casparian strip membrane proteins (CASP) family. As to quaternary structure, homodimer and heterodimers.

Its subcellular location is the cell membrane. This is CASP-like protein 5C1 from Oryza sativa subsp. japonica (Rice).